Here is a 360-residue protein sequence, read N- to C-terminus: Protein phosphatase 1L (360 aa).

Over 1-25 (MIEDTMTLLSLLGRIMRYFLLRPET) the chain is Extracellular. The helical transmembrane segment at 26–42 (LFLLCISLALWSYFFHT) threads the bilayer. Residues 43 to 360 (DEVKTIVKSS…FRNSSKTEEQ (318 aa)) lie on the Cytoplasmic side of the membrane. The region spanning 92–351 (NVAVYSIQGR…DNITVMVVKF (260 aa)) is the PPM-type phosphatase domain. Asp128, Gly129, Asp302, and Asp342 together coordinate Mn(2+).

This sequence belongs to the PP2C family. As to quaternary structure, interacts with MAP3K7/TAK1 and MAP3K5. The cofactor is Mg(2+). It depends on Mn(2+) as a cofactor.

The protein resides in the membrane. The catalysed reaction is O-phospho-L-seryl-[protein] + H2O = L-seryl-[protein] + phosphate. It catalyses the reaction O-phospho-L-threonyl-[protein] + H2O = L-threonyl-[protein] + phosphate. Acts as a suppressor of the SAPK signaling pathways by associating with and dephosphorylating MAP3K7/TAK1 and MAP3K5, and by attenuating the association between MAP3K7/TAK1 and MAP2K4 or MAP2K6. The chain is Protein phosphatase 1L (PPM1L) from Bos taurus (Bovine).